A 262-amino-acid chain; its full sequence is Cytochrome c oxidase subunit 3 (262 aa).

6 helical membrane-spanning segments follow: residues 39–59 (YDISLFVLGNIITILTVYQWW), 83–103 (GMILFILSEVLFFVSFFWAFF), 120–140 (MGIISFNPFQIPLLNTAILLA), 163–183 (GLFFTVLLGIYFTILQAYEYI), 198–218 (FFMATGFHGIHVLIGTTFLLV), and 240–260 (AWYWHFVDVVWLFLYITIYWW).

This sequence belongs to the cytochrome c oxidase subunit 3 family. In terms of assembly, component of the cytochrome c oxidase (complex IV, CIV), a multisubunit enzyme composed of a catalytic core of 3 subunits and several supernumerary subunits. The complex exists as a monomer or a dimer and forms supercomplexes (SCs) in the inner mitochondrial membrane with ubiquinol-cytochrome c oxidoreductase (cytochrome b-c1 complex, complex III, CIII).

It localises to the mitochondrion inner membrane. The catalysed reaction is 4 Fe(II)-[cytochrome c] + O2 + 8 H(+)(in) = 4 Fe(III)-[cytochrome c] + 2 H2O + 4 H(+)(out). Component of the cytochrome c oxidase, the last enzyme in the mitochondrial electron transport chain which drives oxidative phosphorylation. The respiratory chain contains 3 multisubunit complexes succinate dehydrogenase (complex II, CII), ubiquinol-cytochrome c oxidoreductase (cytochrome b-c1 complex, complex III, CIII) and cytochrome c oxidase (complex IV, CIV), that cooperate to transfer electrons derived from NADH and succinate to molecular oxygen, creating an electrochemical gradient over the inner membrane that drives transmembrane transport and the ATP synthase. Cytochrome c oxidase is the component of the respiratory chain that catalyzes the reduction of oxygen to water. Electrons originating from reduced cytochrome c in the intermembrane space (IMS) are transferred via the dinuclear copper A center (CU(A)) of subunit 2 and heme A of subunit 1 to the active site in subunit 1, a binuclear center (BNC) formed by heme A3 and copper B (CU(B)). The BNC reduces molecular oxygen to 2 water molecules using 4 electrons from cytochrome c in the IMS and 4 protons from the mitochondrial matrix. This Drosophila melanogaster (Fruit fly) protein is Cytochrome c oxidase subunit 3 (mt:CoIII).